Consider the following 679-residue polypeptide: Glycine--tRNA ligase beta subunit (679 aa).

It belongs to the class-II aminoacyl-tRNA synthetase family. As to quaternary structure, tetramer of two alpha and two beta subunits.

It is found in the cytoplasm. It catalyses the reaction tRNA(Gly) + glycine + ATP = glycyl-tRNA(Gly) + AMP + diphosphate. This chain is Glycine--tRNA ligase beta subunit, found in Streptococcus pyogenes serotype M2 (strain MGAS10270).